The sequence spans 621 residues: Pentatricopeptide repeat-containing protein At1g12620 (621 aa).

PPR repeat units lie at residues 36–70, 71–105, 106–140, 141–175, 176–210, 211–245, 246–280, 281–315, 316–350, 351–385, 386–420, 421–455, 456–490, 491–525, 526–560, and 561–595; these read GKVS…RPRP, RLID…GIAH, NLYT…GYEP, DTVT…GHKP, TLIT…GFQP, NEVT…KIKL, DAVK…GFKA, DIII…KITP, DVVA…GISP, DTVT…GCGP, NIRT…GVVA, DTVT…RVRP, DIVS…KMEL, DIGI…GVKP, DVKT…GHSP, and NGCT…GFSV.

This sequence belongs to the PPR family. P subfamily.

The polypeptide is Pentatricopeptide repeat-containing protein At1g12620 (Arabidopsis thaliana (Mouse-ear cress)).